We begin with the raw amino-acid sequence, 430 residues long: Adenylosuccinate synthetase (430 aa).

Residues 12–18 (GDEGKGK) and 40–42 (GHT) contribute to the GTP site. Asp-13 acts as the Proton acceptor in catalysis. Mg(2+) contacts are provided by Asp-13 and Gly-40. Residues 13-16 (DEGK), 38-41 (NAGH), Thr-128, Arg-142, Gln-223, Thr-238, and Arg-302 each bind IMP. The Proton donor role is filled by His-41. 298 to 304 (TTTGRPR) serves as a coordination point for substrate. GTP is bound by residues Arg-304, 330 to 332 (LLD), and 412 to 414 (SVG).

This sequence belongs to the adenylosuccinate synthetase family. In terms of assembly, homodimer. Mg(2+) serves as cofactor.

The protein resides in the cytoplasm. The catalysed reaction is IMP + L-aspartate + GTP = N(6)-(1,2-dicarboxyethyl)-AMP + GDP + phosphate + 2 H(+). It participates in purine metabolism; AMP biosynthesis via de novo pathway; AMP from IMP: step 1/2. In terms of biological role, plays an important role in the de novo pathway of purine nucleotide biosynthesis. Catalyzes the first committed step in the biosynthesis of AMP from IMP. The chain is Adenylosuccinate synthetase from Listeria welshimeri serovar 6b (strain ATCC 35897 / DSM 20650 / CCUG 15529 / CIP 8149 / NCTC 11857 / SLCC 5334 / V8).